The primary structure comprises 672 residues: 2,4-dienoyl-CoA reductase [(2E)-enoyl-CoA-producing] (672 aa).

Residues 25–27, Gly-59, and Gln-101 each bind FMN; that span reads SMH. Catalysis depends on Tyr-167, which acts as the Proton donor. Residue Arg-176 participates in substrate binding. Arg-215 lines the FMN pocket. A substrate-binding site is contributed by 253–256; it reads HEAR. FMN contacts are provided by residues Arg-289 and 311–312; that span reads AR. [4Fe-4S] cluster-binding residues include Cys-335 and Cys-338. Residue Gln-340 coordinates FAD. Residue Gln-340 coordinates NADP(+). [4Fe-4S] cluster is bound by residues Cys-342 and Cys-354. Positions 385, 404, 412, 422, and 449 each coordinate FAD. Position 563–564 (563–564) interacts with NADP(+); it reads RK. Lys-567 and Trp-578 together coordinate substrate. FAD-binding positions include Gly-649 and 656–658; that span reads LDA. Position 654–656 (654–656) interacts with NADP(+); sequence MEL.

In the N-terminal section; belongs to the NADH:flavin oxidoreductase/NADH oxidase family. As to quaternary structure, monomer. FMN serves as cofactor. Requires FAD as cofactor. It depends on [4Fe-4S] cluster as a cofactor.

The enzyme catalyses a 4,5-saturated-(2E)-enoyl-CoA + NADP(+) = a (2E,4E)-dienoyl-CoA + NADPH + H(+). It catalyses the reaction a (2E,4Z)-dienoyl-CoA + NADPH + H(+) = a 4,5-saturated-(2E)-enoyl-CoA + NADP(+). It carries out the reaction (2E)-decenoyl-CoA + NADP(+) = (2E,4E)-decadienoyl-CoA + NADPH + H(+). The catalysed reaction is (2E)-decenoyl-CoA + NADP(+) = (2E,4Z)-decadienoyl-CoA + NADPH + H(+). Its pathway is lipid metabolism; fatty acid beta-oxidation. With respect to regulation, is non-competitively inhibited by NADH. Its function is as follows. Functions as an auxiliary enzyme in the beta-oxidation of unsaturated fatty acids with double bonds at even carbon positions. Catalyzes the NADPH-dependent reduction of the C4-C5 double bond of the acyl chain of 2,4-dienoyl-CoA to yield 2-trans-enoyl-CoA. Acts on both isomers, 2-trans,4-cis- and 2-trans,4-trans-decadienoyl-CoA, with almost equal efficiency. Is not active with NADH instead of NADPH. Does not show cis-&gt;trans isomerase activity. This is 2,4-dienoyl-CoA reductase [(2E)-enoyl-CoA-producing] from Escherichia coli (strain K12).